The chain runs to 151 residues: Transcriptional regulator MraZ (151 aa).

2 SpoVT-AbrB domains span residues 5–56 (THRH…PLPT) and 85–128 (SEEL…DAAR).

This sequence belongs to the MraZ family. As to quaternary structure, forms oligomers.

Its subcellular location is the cytoplasm. The protein localises to the nucleoid. The sequence is that of Transcriptional regulator MraZ from Acidithiobacillus ferrooxidans (strain ATCC 23270 / DSM 14882 / CIP 104768 / NCIMB 8455) (Ferrobacillus ferrooxidans (strain ATCC 23270)).